The sequence spans 336 residues: Serpentine receptor class alpha-10 (336 aa).

Topologically, residues 1-28 (MGPITANSSKCATEDQMILQTSLLLRIN) are extracellular. A helical membrane pass occupies residues 29-49 (VIIMTIVAIITFILTYKALFI). The Cytoplasmic segment spans residues 50-61 (LKIRPIFHSSTK). Residues 62–82 (ILLYTSLLFVNVHAVIFMVIQ) form a helical membrane-spanning segment. The Extracellular portion of the chain corresponds to 83–107 (NTALIRSFTLSDKPCEIMRTTLECR). A helical transmembrane segment spans residues 108–128 (FQNHVLIFGIAGVNFNQFGLT). The Cytoplasmic segment spans residues 129–148 (VDRLLATIIPQSYSHMGALP). Residues 149–169 (GVILSVLVVACSIAAPLIIAI) form a helical membrane-spanning segment. The Extracellular portion of the chain corresponds to 170–192 (GDPYDDIVPNCFFFPEHSAPRAN). The helical transmembrane segment at 193 to 213 (IFLVTLSTLVITSIFLNFIII) threads the bilayer. Residues 214–243 (YANKKLEKGCRTRFYVTQRYQKREALISTR) lie on the Cytoplasmic side of the membrane. Residues 244-264 (IISYIAASQFLGLTLYSTMVL) traverse the membrane as a helical segment. At 265–280 (TLRLHKSMIPISIYHN) the chain is on the extracellular side. A helical transmembrane segment spans residues 281-301 (MVWWAYTVPFAAVSLPALLIY). Residues 302–336 (RINQVGSNRKRVINRITAKVETQEEHMKSLKELWA) are Cytoplasmic-facing.

Belongs to the nematode receptor-like protein sra family. In terms of tissue distribution, expressed in the URX sensory neuron, the ALA interneuron and in additional interneurons, pharyngeal neurons and muscle.

The protein resides in the membrane. The sequence is that of Serpentine receptor class alpha-10 (sra-10) from Caenorhabditis elegans.